The sequence spans 356 residues: tRNA-specific 2-thiouridylase MnmA 1 (356 aa).

Residues Gly-8–Ser-15 and Met-34 each bind ATP. Cys-103 serves as the catalytic Nucleophile. Cysteines 103 and 199 form a disulfide. Gly-127 is an ATP binding site. An interaction with tRNA region spans residues Lys-149–Gln-151. Cys-199 serves as the catalytic Cysteine persulfide intermediate. An interaction with tRNA region spans residues Arg-305 to Tyr-306.

The protein belongs to the MnmA/TRMU family.

It localises to the cytoplasm. It carries out the reaction S-sulfanyl-L-cysteinyl-[protein] + uridine(34) in tRNA + AH2 + ATP = 2-thiouridine(34) in tRNA + L-cysteinyl-[protein] + A + AMP + diphosphate + H(+). Functionally, catalyzes the 2-thiolation of uridine at the wobble position (U34) of tRNA, leading to the formation of s(2)U34. This is tRNA-specific 2-thiouridylase MnmA 1 from Clostridium botulinum (strain Loch Maree / Type A3).